The following is a 319-amino-acid chain: Cytochrome f (319 aa).

The first 35 residues, 1–35, serve as a signal peptide directing secretion; the sequence is MQNKDACKSLSSWVSLSISLLVLTVPLIWPYNSTA. Phe-36, Cys-56, Cys-59, and His-60 together coordinate heme. A helical membrane pass occupies residues 285 to 305; that stretch reads IQGLLVFFASVILAQIFLVLK.

This sequence belongs to the cytochrome f family. The 4 large subunits of the cytochrome b6-f complex are cytochrome b6, subunit IV (17 kDa polypeptide, petD), cytochrome f and the Rieske protein, while the 4 small subunits are PetG, PetL, PetM and PetN. The complex functions as a dimer. Heme is required as a cofactor.

The protein resides in the plastid. Its subcellular location is the chloroplast thylakoid membrane. In terms of biological role, component of the cytochrome b6-f complex, which mediates electron transfer between photosystem II (PSII) and photosystem I (PSI), cyclic electron flow around PSI, and state transitions. The polypeptide is Cytochrome f (Staurastrum punctulatum (Green alga)).